The sequence spans 318 residues: Porphobilinogen deaminase (318 aa).

Position 241 is an S-(dipyrrolylmethanemethyl)cysteine (Cys241).

It belongs to the HMBS family. As to quaternary structure, monomer. Dipyrromethane serves as cofactor.

The enzyme catalyses 4 porphobilinogen + H2O = hydroxymethylbilane + 4 NH4(+). Its pathway is porphyrin-containing compound metabolism; protoporphyrin-IX biosynthesis; coproporphyrinogen-III from 5-aminolevulinate: step 2/4. Functionally, tetrapolymerization of the monopyrrole PBG into the hydroxymethylbilane pre-uroporphyrinogen in several discrete steps. The polypeptide is Porphobilinogen deaminase (Citrifermentans bemidjiense (strain ATCC BAA-1014 / DSM 16622 / JCM 12645 / Bem) (Geobacter bemidjiensis)).